The following is a 283-amino-acid chain: Protein canopy homolog 3 (283 aa).

The N-terminal stretch at 1–35 (MEPLPEPTSRPRLRPRPRCLLLLPLLLLLLLLLPA) is a signal peptide. The Saposin B-type domain occupies 55-276 (SKCEVCKYVA…EGIQKASPLT (222 aa)). The N-linked (GlcNAc...) asparagine glycan is linked to Asn-161. A coiled-coil region spans residues 161 to 187 (NETSAEVADLKKQCDVLVEEFEEVIED). The segment at 223-283 (KGDTAALGGK…PLTHSPPDEL (61 aa)) is disordered.

It belongs to the canopy family. In terms of assembly, interacts with HSP90B1; this interaction is disrupted in the presence of ATP. Interacts with TLR1, TLR2, TLR4 and TLR9.

It is found in the endoplasmic reticulum. Toll-like receptor (TLR)-specific co-chaperone for HSP90B1. Required for proper TLR folding, except that of TLR3, and hence controls TLR exit from the endoplasmic reticulum. Consequently, required for both innate and adaptive immune responses. The polypeptide is Protein canopy homolog 3 (CNPY3) (Sus scrofa (Pig)).